The following is a 185-amino-acid chain: Ribosome-recycling factor (185 aa).

The protein belongs to the RRF family.

The protein localises to the cytoplasm. Its function is as follows. Responsible for the release of ribosomes from messenger RNA at the termination of protein biosynthesis. May increase the efficiency of translation by recycling ribosomes from one round of translation to another. The protein is Ribosome-recycling factor of Xanthomonas oryzae pv. oryzae (strain MAFF 311018).